A 331-amino-acid chain; its full sequence is MNYLQLPKIDLHCHLDGSVRPQTVIDLAKLQDVTIPSFNVDDIKALMVAPASCPNLDEYLTRFALPVSVMQTEAALERISFELFEDAAKENVKYLEVRFGPQLHQKMSLNFEQIIGSVVKGMRRAEAQYDIKGNYILSIIKVLPKDDINDVIDAGAKFLNNGVVAFDLAASEEPGFCHEYIPYAKYALEKGYRITIHAGEQGVGQNVYDAISLLGAERIGHGIHINSHQQAYELVKTEAVALETCPSSNVQTKAVESIESHPFGDFYRDGLLVTINTDNRTVSDTTMTKELQLAAEKFNLTEADYFAIYKMSVDNAFTSDEVKLSLLKFID.

Residues His-12 and His-14 each contribute to the Zn(2+) site. Residues His-14 and Asp-16 each contribute to the substrate site. His-197 serves as a coordination point for Zn(2+). The active-site Proton donor is the Glu-200. Asp-278 lines the Zn(2+) pocket.

Belongs to the metallo-dependent hydrolases superfamily. Adenosine and AMP deaminases family. Adenosine deaminase subfamily. Zn(2+) is required as a cofactor.

The catalysed reaction is adenosine + H2O + H(+) = inosine + NH4(+). It catalyses the reaction 2'-deoxyadenosine + H2O + H(+) = 2'-deoxyinosine + NH4(+). Functionally, catalyzes the hydrolytic deamination of adenosine and 2-deoxyadenosine. This Shewanella pealeana (strain ATCC 700345 / ANG-SQ1) protein is Adenosine deaminase.